Consider the following 2221-residue polypeptide: RNA-directed RNA polymerase L (2221 aa).

Positions Lys-29–Glu-292 are endonuclease. Mn(2+) contacts are provided by Glu-54, Asp-91, and Glu-104. Lys-117 is an active-site residue. Residues Leu-1171–Ile-1369 enclose the RdRp catalytic domain. Residue Asp-1327 coordinates Mg(2+).

The protein belongs to the Bunyavirales RNA polymerase family. Homomultimer; the oligomeric structure is essential for the polymerase activity. Interacts with nucleoprotein N. Interacts with protein Z; this interaction inhibits viral transcription and replication, Z partially blocks the product exit tunnel for the releasing nascent RNA product. Mn(2+) is required as a cofactor. The cofactor is Mg(2+).

It is found in the virion. It localises to the host cytoplasm. The catalysed reaction is RNA(n) + a ribonucleoside 5'-triphosphate = RNA(n+1) + diphosphate. Functionally, RNA-dependent RNA polymerase, which is responsible for the replication and transcription of the viral RNA genome using antigenomic RNA as an intermediate. During transcription, synthesizes subgenomic RNAs and assures their capping by a cap-snatching mechanism, which involves the endonuclease activity cleaving the host capped pre-mRNAs. These short capped RNAs are then used as primers for viral transcription. The 3'-end of subgenomic mRNAs molecules are heterogeneous and not polyadenylated. The replicase function is to direct synthesis of antigenomic and genomic RNA which are encapsidated and non capped. As a consequence of the use of the same enzyme for both transcription and replication, these mechanisms need to be well coordinated. These processes may be regulated by proteins N and Z in a dose-dependent manner. Z protein inhibits the viral polymerase L und thus the viral transcription and RNA synthesis. In Sigmodon hispidus (Hispid cotton rat), this protein is RNA-directed RNA polymerase L.